The primary structure comprises 405 residues: 3-isopropylmalate dehydrogenase (405 aa).

86-104 (GAANTVWTTPDGRTDVRPE) contacts NAD(+). Residues arginine 111, arginine 121, arginine 148, and aspartate 237 each contribute to the substrate site. Residues aspartate 237, aspartate 262, and aspartate 266 each coordinate Mg(2+). 301–312 (GSAPDLGKQKVN) contributes to the NAD(+) binding site. The disordered stretch occupies residues 352–371 (ADIGGSSSTSEVGDLLPTRS).

The protein belongs to the isocitrate and isopropylmalate dehydrogenases family. Homodimer. The cofactor is Mg(2+). Requires Mn(2+) as cofactor.

The protein localises to the cytoplasm. The enzyme catalyses (2R,3S)-3-isopropylmalate + NAD(+) = 4-methyl-2-oxopentanoate + CO2 + NADH. Its pathway is amino-acid biosynthesis; L-leucine biosynthesis; L-leucine from 3-methyl-2-oxobutanoate: step 3/4. Catalyzes the oxidation of 3-carboxy-2-hydroxy-4-methylpentanoate (3-isopropylmalate) to 3-carboxy-4-methyl-2-oxopentanoate. The product decarboxylates to 4-methyl-2 oxopentanoate. The protein is 3-isopropylmalate dehydrogenase (LEU2) of Yarrowia lipolytica (strain CLIB 122 / E 150) (Yeast).